Reading from the N-terminus, the 126-residue chain is Small ribosomal subunit protein uS13 (126 aa).

The segment at 94–126 (GLPVRGQKTRNNAHTVKGKPKAAIAGKKKNKVN) is disordered. Over residues 109–126 (VKGKPKAAIAGKKKNKVN) the composition is skewed to basic residues.

The protein belongs to the universal ribosomal protein uS13 family. In terms of assembly, part of the 30S ribosomal subunit. Forms a loose heterodimer with protein S19. Forms two bridges to the 50S subunit in the 70S ribosome.

In terms of biological role, located at the top of the head of the 30S subunit, it contacts several helices of the 16S rRNA. In the 70S ribosome it contacts the 23S rRNA (bridge B1a) and protein L5 of the 50S subunit (bridge B1b), connecting the 2 subunits; these bridges are implicated in subunit movement. Contacts the tRNAs in the A and P-sites. In Aster yellows witches'-broom phytoplasma (strain AYWB), this protein is Small ribosomal subunit protein uS13.